Consider the following 314-residue polypeptide: Methionyl-tRNA formyltransferase (314 aa).

111 to 114 is a binding site for (6S)-5,6,7,8-tetrahydrofolate; sequence SLLP.

Belongs to the Fmt family.

It carries out the reaction L-methionyl-tRNA(fMet) + (6R)-10-formyltetrahydrofolate = N-formyl-L-methionyl-tRNA(fMet) + (6S)-5,6,7,8-tetrahydrofolate + H(+). In terms of biological role, attaches a formyl group to the free amino group of methionyl-tRNA(fMet). The formyl group appears to play a dual role in the initiator identity of N-formylmethionyl-tRNA by promoting its recognition by IF2 and preventing the misappropriation of this tRNA by the elongation apparatus. The chain is Methionyl-tRNA formyltransferase from Nitrobacter winogradskyi (strain ATCC 25391 / DSM 10237 / CIP 104748 / NCIMB 11846 / Nb-255).